Reading from the N-terminus, the 453-residue chain is tRNA modification GTPase MnmE (453 aa).

Residues Arg22, Glu79, and Lys119 each coordinate (6S)-5-formyl-5,6,7,8-tetrahydrofolate. Residues 215 to 376 form the TrmE-type G domain; the sequence is GMKVVIAGRP…LRNHLKECMG (162 aa). Residue Asn225 coordinates K(+). Residues 225–230, 244–250, 269–272, and 334–337 each bind GTP; these read NAGKSS, TDIAGTT, DTAG, and NKAD. Ser229 provides a ligand contact to Mg(2+). 3 residues coordinate K(+): Thr244, Ile246, and Thr249. Thr250 serves as a coordination point for Mg(2+). Lys453 is a (6S)-5-formyl-5,6,7,8-tetrahydrofolate binding site.

It belongs to the TRAFAC class TrmE-Era-EngA-EngB-Septin-like GTPase superfamily. TrmE GTPase family. As to quaternary structure, homodimer. Heterotetramer of two MnmE and two MnmG subunits. K(+) serves as cofactor.

It is found in the cytoplasm. Functionally, exhibits a very high intrinsic GTPase hydrolysis rate. Involved in the addition of a carboxymethylaminomethyl (cmnm) group at the wobble position (U34) of certain tRNAs, forming tRNA-cmnm(5)s(2)U34. This chain is tRNA modification GTPase MnmE, found in Vibrio parahaemolyticus serotype O3:K6 (strain RIMD 2210633).